A 193-amino-acid chain; its full sequence is Chlorate reductase assembly chaperone protein (193 aa).

It belongs to the type II DMSO reductase enzyme chaperone family.

Its subcellular location is the cytoplasm. Functionally, may function as a system-specific chaperone protein essential for the assembly of an active chlorate reductase ClrABC. This is Chlorate reductase assembly chaperone protein (clrD) from Ideonella dechloratans.